The sequence spans 653 residues: MENIDMKYLHLLAKQYPTIAKTATEIINLEAIMNLPKGTEHFLSDVHGEYSAFEQVLRNGSGVVKRKIRDIFGDELDDAEINSLSTLIYYPEEKMDLIAEEMDDMHDWYRTTLFRLIELCQYVASKYTRSKVRKAMPEDFAYILEELLHENYNEEDKKMYYEEILQHIISLDRAAEFISALSRLIQQLVVDHLHIVGDVYDRGPYPDKIMDTLMNYHSLDFQWGNHDILWMGAASGSRVCAANVIRISARYLNLDILEDSYGISLRPLALFADEIYKNDPCTYFQPKNEDNLNYSKAEITQIARMHKAISIIQFKLEGEIINRRKEFDMNHRLLLQMIDYKKGTIHLKGKDYQLLDTHFPTIDPNDPYKLTKEEKELIEKITASFKNCRRLQKHVQFLYSKGSMFLTYNGNLLYHGCIPLYEDGTFMEMKLRGENFSGRELLEQFEILTREAYVRKPGTKEKKYACDIVWYLWTGAVSSLFGKSEMTTFERYFIAEKETHKEEKNPYYKLRNEETICKQILEEFGLDGECGHIINGHTPVKEGKGESPIKANTKMLVIDGGFAKAYHKETTLAGYTLLYNSYGLQLVSHQPFTTKEDAIKNETDILSTRQVIEMEINRKRVRDTDIGKNLNEQATDLKMLLEAYRNGSLHENS.

The protein belongs to the FBPase class 3 family. Requires Mn(2+) as cofactor.

It carries out the reaction beta-D-fructose 1,6-bisphosphate + H2O = beta-D-fructose 6-phosphate + phosphate. The protein operates within carbohydrate biosynthesis; gluconeogenesis. This Listeria innocua serovar 6a (strain ATCC BAA-680 / CLIP 11262) protein is Fructose-1,6-bisphosphatase class 3.